The chain runs to 473 residues: Sucrose-6-phosphate hydrolase (473 aa).

Substrate-binding positions include 44 to 47 (LLND), Gln-63, 106 to 107 (YS), 167 to 168 (RD), and Glu-224. Asp-47 is a catalytic residue.

It belongs to the glycosyl hydrolase 32 family.

Its subcellular location is the cytoplasm. The catalysed reaction is Hydrolysis of terminal non-reducing beta-D-fructofuranoside residues in beta-D-fructofuranosides.. It functions in the pathway glycan biosynthesis; sucrose metabolism. In Lactococcus lactis subsp. lactis (Streptococcus lactis), this protein is Sucrose-6-phosphate hydrolase (scrB).